The following is a 249-amino-acid chain: MAPSRKFFVGGNWKMNGRKQSLGELIGTLNAAKVPADTEVVCAPPTAYIDFARQKLDPKIAVAAQNCYKVTNGAFTGEISPGMIKDCGATWVVLGHSERRHVFGESDELIGQKVAHALAEGLGVIACIGEKLDEREAGITEKVVFEQTKVIADNVKDWSKVVLAYEPVWAIGTGKTATPQQAQEVHEKLRGWLKSNVSDAVAQSTRIIYGGSVTGATCKELASQPDVDGFLVGGASLKPEFVDIINAKQ.

Residues asparagine 12 and lysine 14 each contribute to the substrate site. Lysine 14 is modified (N6-acetyllysine). Phosphoserine is present on serine 21. 3'-nitrotyrosine is present on tyrosine 68. The residue at position 80 (serine 80) is a Phosphoserine. Catalysis depends on histidine 96, which acts as the Electrophile. Serine 106 carries the phosphoserine modification. Lysine 142 is covalently cross-linked (Glycyl lysine isopeptide (Lys-Gly) (interchain with G-Cter in SUMO1)). Position 149 is an N6-succinyllysine (lysine 149). An N6-acetyllysine; alternate modification is found at lysine 156. Lysine 156 bears the N6-succinyllysine; alternate mark. Serine 159 bears the Phosphoserine mark. Residue glutamate 166 is the Proton acceptor of the active site. Threonine 173 is modified (phosphothreonine). At lysine 194 the chain carries N6-acetyllysine; alternate. Lysine 194 bears the N6-succinyllysine; alternate mark. Residue lysine 194 is modified to N6-methyllysine; alternate. A Phosphoserine modification is found at serine 198. Residue tyrosine 209 is modified to 3'-nitrotyrosine. Serine 212 is modified (phosphoserine). Phosphothreonine is present on threonine 214. Serine 223 is modified (phosphoserine). Lysine 238 carries the post-translational modification N6-acetyllysine.

It belongs to the triosephosphate isomerase family. Homodimer.

Its subcellular location is the cytoplasm. It catalyses the reaction D-glyceraldehyde 3-phosphate = dihydroxyacetone phosphate. The enzyme catalyses dihydroxyacetone phosphate = methylglyoxal + phosphate. It participates in carbohydrate degradation; glycolysis; D-glyceraldehyde 3-phosphate from glycerone phosphate: step 1/1. The protein operates within carbohydrate biosynthesis; gluconeogenesis. Its function is as follows. Triosephosphate isomerase is an extremely efficient metabolic enzyme that catalyzes the interconversion between dihydroxyacetone phosphate (DHAP) and D-glyceraldehyde-3-phosphate (G3P) in glycolysis and gluconeogenesis. Functionally, it is also responsible for the non-negligible production of methylglyoxal a reactive cytotoxic side-product that modifies and can alter proteins, DNA and lipids. This is Triosephosphate isomerase (TPI1) from Homo sapiens (Human).